A 206-amino-acid chain; its full sequence is Small ribosomal subunit protein uS5 (206 aa).

Positions 1 to 15 (MTDTPTKQETQSNKD) are enriched in polar residues. The interval 1-50 (MTDTPTKQETQSNKDNVPGAIPVEQKKNNRNDRKRNRRGDSKNLERDSDW) is disordered. Basic and acidic residues predominate over residues 38–50 (RGDSKNLERDSDW). Residues 50–113 (WQERVVQIRR…SDGKKNLVRV (64 aa)) form the S5 DRBM domain.

This sequence belongs to the universal ribosomal protein uS5 family. As to quaternary structure, part of the 30S ribosomal subunit. Contacts proteins S4 and S8.

In terms of biological role, with S4 and S12 plays an important role in translational accuracy. Functionally, located at the back of the 30S subunit body where it stabilizes the conformation of the head with respect to the body. The protein is Small ribosomal subunit protein uS5 of Prochlorococcus marinus (strain MIT 9215).